The primary structure comprises 232 residues: Proteasome subunit alpha (232 aa).

This sequence belongs to the peptidase T1A family. In terms of assembly, the 20S proteasome core is composed of 14 alpha and 14 beta subunits that assemble into four stacked heptameric rings, resulting in a barrel-shaped structure. The two inner rings, each composed of seven catalytic beta subunits, are sandwiched by two outer rings, each composed of seven alpha subunits. The catalytic chamber with the active sites is on the inside of the barrel. Has a gated structure, the ends of the cylinder being occluded by the N-termini of the alpha-subunits. Is capped by the proteasome-associated ATPase, ARC.

The protein localises to the cytoplasm. It participates in protein degradation; proteasomal Pup-dependent pathway. With respect to regulation, the formation of the proteasomal ATPase ARC-20S proteasome complex, likely via the docking of the C-termini of ARC into the intersubunit pockets in the alpha-rings, may trigger opening of the gate for substrate entry. Interconversion between the open-gate and close-gate conformations leads to a dynamic regulation of the 20S proteasome proteolysis activity. Component of the proteasome core, a large protease complex with broad specificity involved in protein degradation. The polypeptide is Proteasome subunit alpha (Acidimicrobium ferrooxidans (strain DSM 10331 / JCM 15462 / NBRC 103882 / ICP)).